Reading from the N-terminus, the 316-residue chain is Remorin 4.1 (316 aa).

3 disordered regions span residues 1 to 108, 125 to 202, and 267 to 287; these read MLSE…PSEL, NANA…SVGQ, and AQNE…SAEA. Over residues 40–53 the composition is skewed to acidic residues; that stretch reads EREEEVVVEEELEE. A compositionally biased stretch (polar residues) spans 92–104; it reads RHTSIRSVGSDTA. Residues 125–135 show a composition bias toward low complexity; sequence NANAAAAAAAN. Composition is skewed to basic and acidic residues over residues 143–153 and 277–287; these read GVDDALGRIGE and KAEEKRASAEA. Positions 242–288 form a coiled coil; it reads VEKANAWLKKYERKLEEKRAKAMEKAQNEVAKARRKAEEKRASAEAK.

Belongs to the remorin family. Interacts with BAK1. Phosphorylated by BRI1. Phosphorylation reduces the binding affinity to BAK1. Expressed in roots, leaf blades and leaf sheaths. Expressed at low levels in stems and spikelets.

It localises to the cell membrane. Its function is as follows. Functions in abscisic acid (ABA) signaling downstream of BZIP23. Acts as antagonistic and negative regulator of brassinosteroid (BR) signaling. Binds to BAK1 and inhibits its interaction with the BR receptor BRI1. Inhibits the formation and subsequent activation of the BRI1-BAK1 receptor complex. The sequence is that of Remorin 4.1 from Oryza sativa subsp. japonica (Rice).